Reading from the N-terminus, the 702-residue chain is Cadmium, zinc and cobalt-transporting ATPase (702 aa).

Residues 1–86 (MRLVKQEYVL…HIKKSADDGY (86 aa)) lie on the Cytoplasmic side of the membrane. The region spanning 4–72 (VKQEYVLDGL…KVKSIDPHVT (69 aa)) is the HMA domain. The Cd(2+) site is built by Cys15 and Cys18. Residues Cys15 and Cys18 each coordinate Co(2+). 2 residues coordinate Zn(2+): Cys15 and Cys18. The helical transmembrane segment at 87–107 (RNRMVNMLIRMAAAVILGAAA) threads the bilayer. Residues 108 to 116 (YLVQSGTIE) lie on the Extracellular side of the membrane. Residues 117 to 136 (FFLFLGAYLIIGGDIIIRAV) form a helical membrane-spanning segment. The Cytoplasmic segment spans residues 137–143 (KNIIRGQ). The helical transmembrane segment at 144–163 (VFDEHFLMALATIGAFLIQQ) threads the bilayer. Residues 164 to 166 (YPE) are Extracellular-facing. The chain crosses the membrane as a helical span at residues 167–186 (GVAVMLFYQIGELFQGAAVS). Over 187–320 (RSRKSISALM…ITKFAKYYTP (134 aa)) the chain is Cytoplasmic. A helical membrane pass occupies residues 321 to 339 (AVVIIAVLLAFVPPLVLSG). The Extracellular segment spans residues 340 to 345 (AALSDW). A helical membrane pass occupies residues 346-363 (VYRALIFLVISCPCALVV). Over 364-648 (SIPLGFFGGI…AIRIAKRTRR (285 aa)) the chain is Cytoplasmic. The active-site 4-aspartylphosphate intermediate is the Asp401. Mg(2+) is bound by residues Asp595 and Asp599. Residues 649–670 (IVWQNIGFALGVKAIFLILGAF) form a helical membrane-spanning segment. At 671–678 (GIATMWEA) the chain is on the extracellular side. The chain crosses the membrane as a helical span at residues 679 to 694 (VFSDVGVTLLAVANAM). The Cytoplasmic portion of the chain corresponds to 695-702 (RVMRLKNK).

It belongs to the cation transport ATPase (P-type) (TC 3.A.3) family. Type IB subfamily.

Its subcellular location is the cell membrane. The catalysed reaction is Zn(2+)(in) + ATP + H2O = Zn(2+)(out) + ADP + phosphate + H(+). It carries out the reaction Cd(2+)(in) + ATP + H2O = Cd(2+)(out) + ADP + phosphate + H(+). Couples the hydrolysis of ATP with the transport of cadmium, zinc and cobalt out of the cell. Does not seem to transport copper. The sequence is that of Cadmium, zinc and cobalt-transporting ATPase (cadA) from Bacillus subtilis (strain 168).